Reading from the N-terminus, the 460-residue chain is Ribosomal protein uS12 methylthiotransferase RimO (460 aa).

The 111-residue stretch at 9-119 (PKVGFVSLGC…VMEAVHAALP (111 aa)) folds into the MTTase N-terminal domain. The [4Fe-4S] cluster site is built by cysteine 18, cysteine 54, cysteine 83, cysteine 150, cysteine 154, and cysteine 157. Residues 136-374 (LTPRHYAYLK…AKQAEISALR (239 aa)) enclose the Radical SAM core domain. A TRAM domain is found at 376 to 444 (EAKIGSVQQC…EHDLFGDALP (69 aa)).

It belongs to the methylthiotransferase family. RimO subfamily. [4Fe-4S] cluster is required as a cofactor.

Its subcellular location is the cytoplasm. The enzyme catalyses L-aspartate(89)-[ribosomal protein uS12]-hydrogen + (sulfur carrier)-SH + AH2 + 2 S-adenosyl-L-methionine = 3-methylsulfanyl-L-aspartate(89)-[ribosomal protein uS12]-hydrogen + (sulfur carrier)-H + 5'-deoxyadenosine + L-methionine + A + S-adenosyl-L-homocysteine + 2 H(+). Catalyzes the methylthiolation of an aspartic acid residue of ribosomal protein uS12. This chain is Ribosomal protein uS12 methylthiotransferase RimO, found in Xanthomonas oryzae pv. oryzae (strain PXO99A).